Reading from the N-terminus, the 147-residue chain is Interleukin-4 (147 aa).

The first 19 residues, 1–19 (MGLRPQLAAILLCLLACTG), serve as a signal peptide directing secretion. N-linked (GlcNAc...) asparagine glycans are attached at residues asparagine 20, asparagine 61, asparagine 90, and asparagine 117. 2 disulfide bridges follow: cysteine 47–cysteine 87 and cysteine 69–cysteine 114.

It belongs to the IL-4/IL-13 family.

It is found in the secreted. In terms of biological role, participates in at least several B-cell activation processes as well as of other cell types. It is a costimulator of DNA-synthesis. It induces the expression of class II MHC molecules on resting B-cells. It enhances both secretion and cell surface expression of IgE and IgG1. It also regulates the expression of the low affinity Fc receptor for IgE (CD23) on both lymphocytes and monocytes. Positively regulates IL31RA expression in macrophages. Stimulates autophagy in dendritic cells by interfering with mTORC1 signaling and through the induction of RUFY4. The polypeptide is Interleukin-4 (IL4) (Mesocricetus auratus (Golden hamster)).